The primary structure comprises 379 residues: Cytochrome b (379 aa).

A run of 4 helical transmembrane segments spans residues 33 to 53 (FGSL…FLDM), 77 to 98 (WLIR…YLHI), 113 to 133 (WNIG…GYVL), and 178 to 198 (FFAF…VHLL). 2 residues coordinate heme b: histidine 83 and histidine 97. Residues histidine 182 and histidine 196 each coordinate heme b. Histidine 201 is an a ubiquinone binding site. 4 helical membrane-spanning segments follow: residues 226–246 (TKDF…VPFF), 288–308 (LGGV…PHIQ), 320–340 (ISQF…WIGG), and 347–367 (FIII…VLMP).

This sequence belongs to the cytochrome b family. The cytochrome bc1 complex contains 11 subunits: 3 respiratory subunits (MT-CYB, CYC1 and UQCRFS1), 2 core proteins (UQCRC1 and UQCRC2) and 6 low-molecular weight proteins (UQCRH/QCR6, UQCRB/QCR7, UQCRQ/QCR8, UQCR10/QCR9, UQCR11/QCR10 and a cleavage product of UQCRFS1). This cytochrome bc1 complex then forms a dimer. It depends on heme b as a cofactor.

The protein localises to the mitochondrion inner membrane. Its function is as follows. Component of the ubiquinol-cytochrome c reductase complex (complex III or cytochrome b-c1 complex) that is part of the mitochondrial respiratory chain. The b-c1 complex mediates electron transfer from ubiquinol to cytochrome c. Contributes to the generation of a proton gradient across the mitochondrial membrane that is then used for ATP synthesis. The chain is Cytochrome b (MT-CYB) from Dipodomys nelsoni (Nelson's kangaroo rat).